The primary structure comprises 293 residues: MTEDSQRNFRSVYYEKVGFRGVEEKKSLEILLKDDRLDIEKLCTFSQRFPLPSMYRALVWKVLLGILPPHHESHVQVMTYRKEQYSDVLHALKVIRFVSDATPQSEVYLYMHRLESGKLPRSPSFPLEPEDEVFLAIAKAMEEMVEDSVDCYWIMRCFVNQLNSKYRDTLPQLPKAFEQYLNLEDSRLLSHLKACCAVSTLPYELWFKKCFAGCLPESSLQRIWDKVVSGSCKILVFVAVEILLTFKIKVMALNSAEKITKFLENIPQDSSDAIVSKAIDLWHKHCGTPVHSA.

Residues 50–231 form the Rab-GAP TBC domain; that stretch reads PLPSMYRALV…RIWDKVVSGS (182 aa).

Component of the TSC-TBC complex (also named Rhebulator complex), composed of 2 molecules of TSC1, 2 molecules of TSC2 and 1 molecule of TBC1D7. Interacts with TSC1 (via C-terminal half of the coiled-coil domain).

Its subcellular location is the lysosome membrane. The protein localises to the cytoplasmic vesicle. The protein resides in the cytoplasm. It is found in the cytosol. Functionally, non-catalytic component of the TSC-TBC complex, a multiprotein complex that acts as a negative regulator of the canonical mTORC1 complex, an evolutionarily conserved central nutrient sensor that stimulates anabolic reactions and macromolecule biosynthesis to promote cellular biomass generation and growth. The TSC-TBC complex acts as a GTPase-activating protein (GAP) for the small GTPase RHEB, a direct activator of the protein kinase activity of mTORC1. In absence of nutrients, the TSC-TBC complex inhibits mTORC1, thereby preventing phosphorylation of ribosomal protein S6 kinase (RPS6KB1 and RPS6KB2) and EIF4EBP1 (4E-BP1) by the mTORC1 signaling. The TSC-TBC complex is inactivated in response to nutrients, relieving inhibition of mTORC1. The protein is TBC1 domain family member 7 (TBC1D7) of Bos taurus (Bovine).